The primary structure comprises 325 residues: Protein FAM50B (325 aa).

A2 carries the post-translational modification N-acetylalanine. 2 disordered regions span residues 92-111 and 137-160; these read QHLE…EQRR and RRAG…DREE.

Belongs to the FAM50 family. Widely expressed. Mostly abundant in testis and adult and fetal brain.

This Homo sapiens (Human) protein is Protein FAM50B (FAM50B).